Here is a 194-residue protein sequence, read N- to C-terminus: E3 ubiquitin-protein ligase RNF185 (194 aa).

Positions 1–27 (MASAAASESSSSSSSSSAGAANGQSAG) are enriched in low complexity. The segment at 1 to 32 (MASAAASESSSSSSSSSAGAANGQSAGESGGG) is disordered. Residues 31 to 82 (GGGAQDSTFECNICLDTSKDAVISLCGHLFCWPCLHQWLETRPNRQVCPVCK) form a required for ubiquitin ligase activity and protection against ER stress-induced cell death region. The RING-type zinc finger occupies 41 to 82 (CNICLDTSKDAVISLCGHLFCWPCLHQWLETRPNRQVCPVCK). Residues 92–126 (PLYGRGSTGQQDPREKTPPRPQGQRPEPENRGGFQ) are disordered. Transmembrane regions (helical) follow at residues 133-153 (GGFQ…ATAF) and 174-194 (QFLS…LLIA).

It localises to the mitochondrion outer membrane. It is found in the endoplasmic reticulum membrane. The enzyme catalyses S-ubiquitinyl-[E2 ubiquitin-conjugating enzyme]-L-cysteine + [acceptor protein]-L-lysine = [E2 ubiquitin-conjugating enzyme]-L-cysteine + N(6)-ubiquitinyl-[acceptor protein]-L-lysine.. The protein operates within protein modification; protein ubiquitination. In terms of biological role, E3 ubiquitin-protein ligase that regulates selective mitochondrial autophagy by mediating 'Lys-63'-linked polyubiquitination. Acts in the endoplasmic reticulum (ER)-associated degradation (ERAD) pathway, which targets misfolded proteins that accumulate in the endoplasmic reticulum (ER) for ubiquitination and subsequent proteasome-mediated degradation. Protects cells from ER stress-induced apoptosis. Responsible for the cotranslational ubiquitination and degradation of CFTR in the ERAD pathway. Also acts as a regulator of the innate antiviral response by catalyzing 'Lys-27'-linked polyubiquitination of CGAS, thereby promoting CGAS cyclic GMP-AMP synthase activity. Preferentially associates with the E2 enzymes UBE2J1 and UBE2J2. The sequence is that of E3 ubiquitin-protein ligase RNF185 (rnf185) from Danio rerio (Zebrafish).